The primary structure comprises 479 residues: Adenosylhomocysteinase (479 aa).

Residues threonine 66, aspartate 142, and glutamate 203 each coordinate substrate. 204 to 206 (TTT) lines the NAD(+) pocket. Substrate is bound by residues lysine 233 and aspartate 237. NAD(+) contacts are provided by residues asparagine 238, 267–272 (GYGDVG), glutamate 290, asparagine 325, 346–348 (IGH), and asparagine 394.

This sequence belongs to the adenosylhomocysteinase family. The cofactor is NAD(+).

The protein resides in the cytoplasm. The catalysed reaction is S-adenosyl-L-homocysteine + H2O = L-homocysteine + adenosine. The protein operates within amino-acid biosynthesis; L-homocysteine biosynthesis; L-homocysteine from S-adenosyl-L-homocysteine: step 1/1. Its function is as follows. May play a key role in the regulation of the intracellular concentration of adenosylhomocysteine. The protein is Adenosylhomocysteinase of Nitratidesulfovibrio vulgaris (strain ATCC 29579 / DSM 644 / CCUG 34227 / NCIMB 8303 / VKM B-1760 / Hildenborough) (Desulfovibrio vulgaris).